We begin with the raw amino-acid sequence, 143 residues long: Endoribonuclease YbeY (143 aa).

Zn(2+) is bound by residues H106, H110, and H116.

The protein belongs to the endoribonuclease YbeY family. Zn(2+) serves as cofactor.

It is found in the cytoplasm. Its function is as follows. Single strand-specific metallo-endoribonuclease involved in late-stage 70S ribosome quality control and in maturation of the 3' terminus of the 16S rRNA. In Petrotoga mobilis (strain DSM 10674 / SJ95), this protein is Endoribonuclease YbeY.